The primary structure comprises 706 residues: Elongation factor G (706 aa).

A tr-type G domain is found at 15-291 (LKTRNIGISA…GVLDYLASPV (277 aa)). GTP-binding positions include 24-31 (AHIDSGKT), 91-95 (DTPGH), and 145-148 (NKLD).

This sequence belongs to the TRAFAC class translation factor GTPase superfamily. Classic translation factor GTPase family. EF-G/EF-2 subfamily.

It localises to the cytoplasm. Functionally, catalyzes the GTP-dependent ribosomal translocation step during translation elongation. During this step, the ribosome changes from the pre-translocational (PRE) to the post-translocational (POST) state as the newly formed A-site-bound peptidyl-tRNA and P-site-bound deacylated tRNA move to the P and E sites, respectively. Catalyzes the coordinated movement of the two tRNA molecules, the mRNA and conformational changes in the ribosome. The protein is Elongation factor G of Leptospira interrogans serogroup Icterohaemorrhagiae serovar copenhageni (strain Fiocruz L1-130).